The following is a 622-amino-acid chain: Matrilin-4 (622 aa).

Positions methionine 1–glutamate 18 are cleaved as a signal peptide. Residues aspartate 34 to leucine 213 form the VWFA 1 domain. The N-linked (GlcNAc...) asparagine glycan is linked to asparagine 69. Residues glycine 215–leucine 255 enclose the EGF-like 1; incomplete domain. 12 disulfide bridges follow: cysteine 219–cysteine 230, cysteine 226–cysteine 239, cysteine 241–cysteine 254, cysteine 260–cysteine 271, cysteine 267–cysteine 280, cysteine 282–cysteine 295, cysteine 301–cysteine 312, cysteine 308–cysteine 321, cysteine 323–cysteine 336, cysteine 342–cysteine 353, cysteine 349–cysteine 362, and cysteine 364–cysteine 377. N-linked (GlcNAc...) asparagine glycosylation occurs at asparagine 251. 3 EGF-like domains span residues alanine 256–glutamine 292, alanine 297–glutamine 337, and cysteine 342–cysteine 377. An N-linked (GlcNAc...) asparagine glycan is attached at asparagine 305. The 176-residue stretch at aspartate 386–leucine 561 folds into the VWFA 2 domain. Residues glycine 591 to lysine 622 are a coiled coil.

In terms of assembly, interacts with COMP. Embryonic kidney, lung and placenta.

Its subcellular location is the secreted. In terms of biological role, major component of the extracellular matrix of cartilage. In Homo sapiens (Human), this protein is Matrilin-4 (MATN4).